A 228-amino-acid chain; its full sequence is UPF0173 metal-dependent hydrolase LMOf2365_1599 (228 aa).

This sequence belongs to the UPF0173 family.

The polypeptide is UPF0173 metal-dependent hydrolase LMOf2365_1599 (Listeria monocytogenes serotype 4b (strain F2365)).